Here is a 720-residue protein sequence, read N- to C-terminus: Catalase-peroxidase (720 aa).

The segment at residues 82-207 (WHSAGTYRTF…LGNTVMGLIY (126 aa)) is a cross-link (tryptophyl-tyrosyl-methioninium (Trp-Tyr) (with M-233)). The active-site Proton acceptor is the H83. Residues 207-233 (YVNPEGPNGEPDLEGSAKNIRESFGKM) constitute a cross-link (tryptophyl-tyrosyl-methioninium (Tyr-Met) (with W-82)). Position 248 (H248) interacts with heme b.

It belongs to the peroxidase family. Peroxidase/catalase subfamily. As to quaternary structure, homodimer or homotetramer. It depends on heme b as a cofactor. In terms of processing, formation of the three residue Trp-Tyr-Met cross-link is important for the catalase, but not the peroxidase activity of the enzyme.

It carries out the reaction H2O2 + AH2 = A + 2 H2O. It catalyses the reaction 2 H2O2 = O2 + 2 H2O. Functionally, bifunctional enzyme with both catalase and broad-spectrum peroxidase activity. This is Catalase-peroxidase from Halobacterium salinarum (strain ATCC 29341 / DSM 671 / R1).